Reading from the N-terminus, the 301-residue chain is Sulfate adenylyltransferase subunit 2 (301 aa).

Residues Arg279 to Phe301 form a disordered region.

This sequence belongs to the PAPS reductase family. CysD subfamily. Heterodimer composed of CysD, the smaller subunit, and CysN.

It carries out the reaction sulfate + ATP + H(+) = adenosine 5'-phosphosulfate + diphosphate. It participates in sulfur metabolism; hydrogen sulfide biosynthesis; sulfite from sulfate: step 1/3. Functionally, with CysN forms the ATP sulfurylase (ATPS) that catalyzes the adenylation of sulfate producing adenosine 5'-phosphosulfate (APS) and diphosphate, the first enzymatic step in sulfur assimilation pathway. APS synthesis involves the formation of a high-energy phosphoric-sulfuric acid anhydride bond driven by GTP hydrolysis by CysN coupled to ATP hydrolysis by CysD. The chain is Sulfate adenylyltransferase subunit 2 from Mesorhizobium japonicum (strain LMG 29417 / CECT 9101 / MAFF 303099) (Mesorhizobium loti (strain MAFF 303099)).